We begin with the raw amino-acid sequence, 308 residues long: Ribosomal RNA large subunit methyltransferase F (308 aa).

Belongs to the methyltransferase superfamily. METTL16/RlmF family.

It localises to the cytoplasm. It catalyses the reaction adenosine(1618) in 23S rRNA + S-adenosyl-L-methionine = N(6)-methyladenosine(1618) in 23S rRNA + S-adenosyl-L-homocysteine + H(+). Specifically methylates the adenine in position 1618 of 23S rRNA. The sequence is that of Ribosomal RNA large subunit methyltransferase F from Escherichia coli (strain SMS-3-5 / SECEC).